Here is a 322-residue protein sequence, read N- to C-terminus: MKKYKTGLVLLVIALALLVYFSPWFFLHIASWQKEFNQLISENLHQIQNNSIKAGTTLIFASFVYGVLHALGPGHGKFIIASYLSTHESQLKQSTILSLLSSLMQGIVAITATTLLVVVLNLSSRYFKLSQLWLERTALLLLVFLGCYWIWQGLRAYRKKAKLAIKSLNPLPLHEKSAVKNNRTFQPNTCSCGHQHLPSPTQTAQATNLKSQFLVILTIGMRPCSGAIFVLFLAYMLDLYSWGILAVLAMSFGTGLMLSAFAGIVRYARNTAIHLGHWYSSKNTKGKSESIVKLIAGGIMLFFALSLLYGTTISTGGSKILF.

6 consecutive transmembrane segments (helical) span residues 7 to 27, 54 to 74, 100 to 120, 137 to 157, 228 to 248, and 294 to 314; these read GLVL…WFFL, AGTT…LGPG, LSSL…VVVL, TALL…LRAY, IFVL…LAVL, and LIAG…TTIS.

This sequence belongs to the NiCoT transporter (TC 2.A.52) family.

It is found in the cell membrane. Efflux system for nickel and cobalt. This chain is Putative nickel/cobalt efflux system HI_1248, found in Haemophilus influenzae (strain ATCC 51907 / DSM 11121 / KW20 / Rd).